Here is a 229-residue protein sequence, read N- to C-terminus: Ribonuclease 3 (229 aa).

Residues 5 to 127 enclose the RNase III domain; that stretch reads LSRLERKLGH…LIGAIYLDAG (123 aa). Glu-40 lines the Mg(2+) pocket. Residue Asp-44 is part of the active site. The Mg(2+) site is built by Asp-113 and Glu-116. Glu-116 is an active-site residue. Residues 154–224 form the DRBM domain; it reads DPKTRLQEFL…AAAALIALGV (71 aa).

It belongs to the ribonuclease III family. In terms of assembly, homodimer. Mg(2+) is required as a cofactor.

It is found in the cytoplasm. It catalyses the reaction Endonucleolytic cleavage to 5'-phosphomonoester.. Its function is as follows. Digests double-stranded RNA. Involved in the processing of primary rRNA transcript to yield the immediate precursors to the large and small rRNAs (23S and 16S). Processes some mRNAs, and tRNAs when they are encoded in the rRNA operon. Processes pre-crRNA and tracrRNA of type II CRISPR loci if present in the organism. This chain is Ribonuclease 3, found in Ectopseudomonas mendocina (strain ymp) (Pseudomonas mendocina).